A 146-amino-acid polypeptide reads, in one-letter code: Large ribosomal subunit protein uL13 (146 aa).

The protein belongs to the universal ribosomal protein uL13 family. In terms of assembly, part of the 50S ribosomal subunit.

Functionally, this protein is one of the early assembly proteins of the 50S ribosomal subunit, although it is not seen to bind rRNA by itself. It is important during the early stages of 50S assembly. The protein is Large ribosomal subunit protein uL13 of Malacoplasma penetrans (strain HF-2) (Mycoplasma penetrans).